Consider the following 309-residue polypeptide: Fructosamine-3-kinase (309 aa).

Met-1 carries the N-acetylmethionine modification. Glu-89–Leu-91 contacts ATP. Asp-217 functions as the Proton acceptor in the catalytic mechanism.

The protein belongs to the fructosamine kinase family. Monomer. In terms of tissue distribution, widely expressed. Expressed in erythrocytes.

The enzyme catalyses N(6)-(D-fructosyl)-L-lysyl-[protein] + ATP = N(6)-(3-O-phospho-D-fructosyl)-L-lysyl-[protein] + ADP + H(+). It carries out the reaction N(6)-D-ribulosyl-L-lysyl-[protein] + ATP = N(6)-(3-O-phospho-D-ribulosyl)-L-lysyl-[protein] + ADP + H(+). The catalysed reaction is N(6)-(D-psicosyl)-L-lysyl-[protein] + ATP = N(6)-(3-O-phospho-D-psicosyl)-L-lysyl-[protein] + ADP + H(+). In terms of biological role, fructosamine-3-kinase involved in protein deglycation by mediating phosphorylation of fructoselysine residues on glycated proteins, to generate fructoselysine-3 phosphate. Fructoselysine-3 phosphate adducts are unstable and decompose under physiological conditions. Involved in intracellular deglycation in erythrocytes. Involved in the response to oxidative stress by mediating deglycation of NFE2L2/NRF2, glycation impairing NFE2L2/NRF2 function. Also able to phosphorylate psicosamines and ribulosamines. The polypeptide is Fructosamine-3-kinase (Homo sapiens (Human)).